We begin with the raw amino-acid sequence, 593 residues long: Vitamin H transporter (593 aa).

At 1–121 the chain is on the extracellular side; the sequence is MTISNKSWRS…TTQTKAERRL (121 aa). Phosphoserine occurs at positions 32, 33, and 43. The chain crosses the membrane as a helical span at residues 122 to 142; the sequence is LYKLDIIIALYFFMLCWSKSV. The Cytoplasmic segment spans residues 143–166; sequence DLNNYTNAYVSNMKEDLNMKGNDY. Residues 167 to 187 traverse the membrane as a helical segment; the sequence is VYTSTIANVGAIVFQLPFMYL. The Extracellular segment spans residues 188-190; that stretch reads LPR. A helical transmembrane segment spans residues 191–211; it reads FPSHIILPVMDLGWTWFTFAC. Topologically, residues 212 to 224 are cytoplasmic; sequence YRANSLAELRAYR. A helical transmembrane segment spans residues 225-245; it reads FILSAFGAAYYPVSQYILGCW. The Extracellular portion of the chain corresponds to 246–291; it reads YAPDEINSRVCLFFCGQQLGSVTSGLLQSRIFKSLNGVHGLAGWRW. The chain crosses the membrane as a helical span at residues 292 to 312; it reads MFLIDAIAISLPTAIIGFFVI. Over 313 to 361 the chain is Cytoplasmic; that stretch reads PGVPSKCYSLFLTDEEIRIARARNKRNQIKDGVDKSKLAPLWSRKLWKK. The helical transmembrane segment at 362–382 threads the bilayer; it reads VFCTPAFWVLVVFDTCSWNNM. The Extracellular segment spans residues 383–408; that stretch reads TAYSGSYTLWLKSNTKYSIAQVNNLS. Residues 409-429 form a helical membrane-spanning segment; the sequence is VIPACLGFAYVIFCAFGADLF. The Cytoplasmic segment spans residues 430-432; that stretch reads RCK. A helical transmembrane segment spans residues 433-453; the sequence is WIFMVFAAIMNTVSCALLIKW. Residues 454–460 are Extracellular-facing; it reads DIPSKAK. A helical membrane pass occupies residues 461-481; sequence WYAFFTTYFSVAASPCLWSFI. Residues 482 to 492 are Cytoplasmic-facing; sequence NDFLRFDPQVK. Residues 493-513 traverse the membrane as a helical segment; it reads AITWIAIYSFSQSTYAWIPTL. The Extracellular segment spans residues 514-526; sequence AWPTVESPRFKTG. A helical membrane pass occupies residues 527 to 547; sequence YTVSLIFGAIYGLWTFVVLFF. Residues 548 to 593 are Cytoplasmic-facing; it reads YKRNEKKHALGNGIILYDSNKGEELPEFVKKNMEERDGYYYLKRSS.

This sequence belongs to the major facilitator superfamily. Allantoate permease family.

It is found in the cell membrane. Functionally, involved in uptake of biotin with the concomitant entry of protons. In Saccharomyces cerevisiae (strain ATCC 204508 / S288c) (Baker's yeast), this protein is Vitamin H transporter (VHT1).